The following is a 182-amino-acid chain: Large ribosomal subunit protein uL5 (182 aa).

Belongs to the universal ribosomal protein uL5 family. As to quaternary structure, part of the 50S ribosomal subunit; part of the 5S rRNA/L5/L18/L25 subcomplex. Contacts the 5S rRNA and the P site tRNA. Forms a bridge to the 30S subunit in the 70S ribosome.

Its function is as follows. This is one of the proteins that bind and probably mediate the attachment of the 5S RNA into the large ribosomal subunit, where it forms part of the central protuberance. In the 70S ribosome it contacts protein S13 of the 30S subunit (bridge B1b), connecting the 2 subunits; this bridge is implicated in subunit movement. Contacts the P site tRNA; the 5S rRNA and some of its associated proteins might help stabilize positioning of ribosome-bound tRNAs. This is Large ribosomal subunit protein uL5 from Coxiella burnetii (strain CbuG_Q212) (Coxiella burnetii (strain Q212)).